A 262-amino-acid chain; its full sequence is Global transcriptional regulator CodY (262 aa).

The tract at residues 1 to 159 is GAF domain; sequence MATLLEKTRK…ATTVIGVQLS (159 aa). The H-T-H motif DNA-binding region spans 207–226; the sequence is ASVIADKIGITRSVIVNALR.

The protein belongs to the CodY family.

The protein localises to the cytoplasm. DNA-binding global transcriptional regulator which is involved in the adaptive response to starvation and acts by directly or indirectly controlling the expression of numerous genes in response to nutrient availability. During rapid exponential growth, CodY is highly active and represses genes whose products allow adaptation to nutrient depletion. The polypeptide is Global transcriptional regulator CodY (Lactococcus lactis subsp. lactis (strain IL1403) (Streptococcus lactis)).